The chain runs to 487 residues: Glutamyl-tRNA(Gln) amidotransferase subunit A (487 aa).

Residues lysine 77 and serine 152 each act as charge relay system in the active site. Serine 176 acts as the Acyl-ester intermediate in catalysis.

Belongs to the amidase family. GatA subfamily. As to quaternary structure, heterotrimer of A, B and C subunits.

It carries out the reaction L-glutamyl-tRNA(Gln) + L-glutamine + ATP + H2O = L-glutaminyl-tRNA(Gln) + L-glutamate + ADP + phosphate + H(+). In terms of biological role, allows the formation of correctly charged Gln-tRNA(Gln) through the transamidation of misacylated Glu-tRNA(Gln) in organisms which lack glutaminyl-tRNA synthetase. The reaction takes place in the presence of glutamine and ATP through an activated gamma-phospho-Glu-tRNA(Gln). This chain is Glutamyl-tRNA(Gln) amidotransferase subunit A, found in Lactiplantibacillus plantarum (strain ATCC BAA-793 / NCIMB 8826 / WCFS1) (Lactobacillus plantarum).